The following is a 386-amino-acid chain: Endonuclease III homolog 2, chloroplastic (386 aa).

Residues 1-50 constitute a chloroplast transit peptide; sequence MILTGAASTFPIVARVLNAMNRRMYAATTLSSAKSISAESLNLRSDSNSE. The interval 44–66 is disordered; that stretch reads RSDSNSEAAHGASESETRVSLRK. In terms of domain architecture, HhH spans 252 to 278; that stretch reads YDGDIPRTLEELLSLPGVGPKIAHLVL. The active-site Nucleophile; for N-glycosylase activity is K272. [4Fe-4S] cluster-binding residues include C347, C354, C357, and C363.

Belongs to the Nth/MutY family. It depends on [4Fe-4S] cluster as a cofactor.

The protein localises to the plastid. It is found in the chloroplast stroma. It localises to the chloroplast nucleoid. It catalyses the reaction 2'-deoxyribonucleotide-(2'-deoxyribose 5'-phosphate)-2'-deoxyribonucleotide-DNA = a 3'-end 2'-deoxyribonucleotide-(2,3-dehydro-2,3-deoxyribose 5'-phosphate)-DNA + a 5'-end 5'-phospho-2'-deoxyribonucleoside-DNA + H(+). Its function is as follows. Bifunctional DNA N-glycosylase with associated apurinic/apyrimidinic (AP) lyase function that catalyzes the first step in base excision repair (BER), the primary repair pathway for the repair of oxidative DNA damage. The DNA N-glycosylase activity releases the damaged DNA base from DNA by cleaving the N-glycosidic bond, leaving an AP site. The AP lyase activity cleaves the phosphodiester bond 3' to the AP site by a beta-elimination. Primarily recognizes and repairs oxidative base damage of pyrimidines. The chain is Endonuclease III homolog 2, chloroplastic (NTH2) from Arabidopsis thaliana (Mouse-ear cress).